The following is a 29-amino-acid chain: Cycloviolacin-O22 (29 aa).

Residues G1–N29 constitute a cross-link (cyclopeptide (Gly-Asn)). Disulfide bonds link C5–C19, C9–C21, and C14–C26.

In terms of processing, this is a cyclic peptide. As to expression, expressed in roots and runners but not in leaves, petals and petioles (at protein level).

Its function is as follows. Probably participates in a plant defense mechanism. This Viola odorata (Sweet violet) protein is Cycloviolacin-O22.